Reading from the N-terminus, the 169-residue chain is UPF0316 protein Dde_2502 (169 aa).

A run of 3 helical transmembrane segments spans residues 1-21 (MITA…LCDV), 38-58 (LAFS…SRVI), and 68-88 (LAFA…EGVF).

The protein belongs to the UPF0316 family.

The protein localises to the cell membrane. In Oleidesulfovibrio alaskensis (strain ATCC BAA-1058 / DSM 17464 / G20) (Desulfovibrio alaskensis), this protein is UPF0316 protein Dde_2502.